The primary structure comprises 153 residues: Large ribosomal subunit protein uL15 (153 aa).

Positions 21-41 (RGIGSGKGKTGGRGIKGQKSR) are disordered. A compositionally biased stretch (gly residues) spans 23–35 (IGSGKGKTGGRGI).

Belongs to the universal ribosomal protein uL15 family. As to quaternary structure, part of the 50S ribosomal subunit.

Its function is as follows. Binds to the 23S rRNA. The protein is Large ribosomal subunit protein uL15 of Rickettsia rickettsii (strain Iowa).